Here is a 147-residue protein sequence, read N- to C-terminus: Lysozyme C (147 aa).

A signal peptide spans 1-18; that stretch reads MRSLLVLVLCFLPLAALG. Positions 19–147 constitute a C-type lysozyme domain; sequence KVYGRCELAA…VNAWIRGCRL (129 aa). 4 cysteine pairs are disulfide-bonded: cysteine 24–cysteine 145, cysteine 48–cysteine 133, cysteine 82–cysteine 98, and cysteine 94–cysteine 112. Residues glutamate 53 and aspartate 70 contribute to the active site.

It belongs to the glycosyl hydrolase 22 family. Monomer.

The protein resides in the secreted. It catalyses the reaction Hydrolysis of (1-&gt;4)-beta-linkages between N-acetylmuramic acid and N-acetyl-D-glucosamine residues in a peptidoglycan and between N-acetyl-D-glucosamine residues in chitodextrins.. Lysozymes have primarily a bacteriolytic function; those in tissues and body fluids are associated with the monocyte-macrophage system and enhance the activity of immunoagents. The polypeptide is Lysozyme C (LYZ) (Coturnix japonica (Japanese quail)).